Consider the following 445-residue polypeptide: Type II methyltransferase M.Bpa9945I (445 aa).

An SAM-dependent MTase C5-type domain is found at 1-444 (MIVIDLFSGA…RAVKDVINGH (444 aa)). C136 is an active-site residue.

The protein belongs to the class I-like SAM-binding methyltransferase superfamily. C5-methyltransferase family.

It localises to the cytoplasm. The enzyme catalyses a 2'-deoxycytidine in DNA + S-adenosyl-L-methionine = a 5-methyl-2'-deoxycytidine in DNA + S-adenosyl-L-homocysteine + H(+). Functionally, component of antiviral defense system DISARM (defense island system associated with restriction-modification), composed of DrmE, DrmA, DrmB, DrmC and DrmMII. DISARM is probably a multi-gene restriction module, this subunit is a DNA methylase. Expression of DISARM in B.subtilis (strain BEST7003) confers resistance to phages Nf, phi29, phi105, phi3T, SPO1, SPR and SPP1. Protection is over 10(7)-fold against phi3T, 10(4)-10(5)-fold against Nf, phi29, phi105 and SPR, 100-fold against SPO1 and 10-fold against SPP1. DISARM does not interfere with phage adsorption, but instead interferes with (phi3T) DNA replication early in its cycle, preventing replication, circularization and lysogeny and probably causes phage DNA degradation (DNA is degraded in SPP1-infected cells). Expression of this methylase alone leads to highly methylated phage, however they are still susceptible to the DISARM system. A methylase, recognizes the double-stranded sequence 5'-CCWGG-3', methylates C-2 on both strands. Phage Nf does not have any 5'-CCWGG-3' motifs but is still targeted by the DISARM system. This chain is Type II methyltransferase M.Bpa9945I, found in Bacillus paralicheniformis (strain ATCC 9945a / NCIMB 11709 / CD-2).